We begin with the raw amino-acid sequence, 67 residues long: Alpha-conotoxin-like Qc1.1a (67 aa).

An N-terminal signal peptide occupies residues 1–21 (MGMRMMFTMFLLVVLAITVVS). A propeptide spanning residues 22 to 46 (FTSDHASDGRNTAANDKASNLMALR) is cleaved from the precursor. Cystine bridges form between cysteine 49–cysteine 55 and cysteine 50–cysteine 63. Positions 51–53 (PDP) are lacks the Ser-Xaa-Pro motif that is crucial for potent interaction with nAChR.

The protein belongs to the conotoxin A superfamily. As to expression, expressed by the venom duct.

It localises to the secreted. Alpha-conotoxins act on postsynaptic membranes, they bind to the nicotinic acetylcholine receptors (nAChR) and thus inhibit them. Has possibly a distinct nAChR binding mode from other alpha-conotoxins, due to a different three residue motif (lacks the Ser-Xaa-Pro motif). The chain is Alpha-conotoxin-like Qc1.1a from Conus quercinus (Oak cone).